A 481-amino-acid chain; its full sequence is Aspartyl/glutamyl-tRNA(Asn/Gln) amidotransferase subunit B (481 aa).

It belongs to the GatB/GatE family. GatB subfamily. In terms of assembly, heterotrimer of A, B and C subunits.

It catalyses the reaction L-glutamyl-tRNA(Gln) + L-glutamine + ATP + H2O = L-glutaminyl-tRNA(Gln) + L-glutamate + ADP + phosphate + H(+). The enzyme catalyses L-aspartyl-tRNA(Asn) + L-glutamine + ATP + H2O = L-asparaginyl-tRNA(Asn) + L-glutamate + ADP + phosphate + 2 H(+). In terms of biological role, allows the formation of correctly charged Asn-tRNA(Asn) or Gln-tRNA(Gln) through the transamidation of misacylated Asp-tRNA(Asn) or Glu-tRNA(Gln) in organisms which lack either or both of asparaginyl-tRNA or glutaminyl-tRNA synthetases. The reaction takes place in the presence of glutamine and ATP through an activated phospho-Asp-tRNA(Asn) or phospho-Glu-tRNA(Gln). This Pseudomonas fluorescens (strain ATCC BAA-477 / NRRL B-23932 / Pf-5) protein is Aspartyl/glutamyl-tRNA(Asn/Gln) amidotransferase subunit B.